The primary structure comprises 226 residues: Putative ABC transporter ATP-binding protein DR_2469 (226 aa).

The ABC transporter domain occupies 2–225; sequence IELRHVSHHY…LRVYRERMTW (224 aa). 33–40 is an ATP binding site; that stretch reads GSNGSGKS.

This sequence belongs to the ABC transporter superfamily.

It is found in the cell membrane. Its function is as follows. Probably part of an ABC transporter complex. Responsible for energy coupling to the transport system. The sequence is that of Putative ABC transporter ATP-binding protein DR_2469 from Deinococcus radiodurans (strain ATCC 13939 / DSM 20539 / JCM 16871 / CCUG 27074 / LMG 4051 / NBRC 15346 / NCIMB 9279 / VKM B-1422 / R1).